Reading from the N-terminus, the 270-residue chain is Shikimate dehydrogenase (NADP(+)) (270 aa).

Shikimate contacts are provided by residues 15-17 (SKS) and Thr62. The Proton acceptor role is filled by Lys66. Asp78 lines the NADP(+) pocket. Residues Asn87 and Asp103 each contribute to the shikimate site. NADP(+) contacts are provided by residues 128-132 (GAGGA), 152-157 (NRTVDR), and Leu213. Residue Tyr215 participates in shikimate binding. Gly237 lines the NADP(+) pocket.

This sequence belongs to the shikimate dehydrogenase family. Homodimer.

The catalysed reaction is shikimate + NADP(+) = 3-dehydroshikimate + NADPH + H(+). It participates in metabolic intermediate biosynthesis; chorismate biosynthesis; chorismate from D-erythrose 4-phosphate and phosphoenolpyruvate: step 4/7. Its function is as follows. Involved in the biosynthesis of the chorismate, which leads to the biosynthesis of aromatic amino acids. Catalyzes the reversible NADPH linked reduction of 3-dehydroshikimate (DHSA) to yield shikimate (SA). The protein is Shikimate dehydrogenase (NADP(+)) of Halorhodospira halophila (strain DSM 244 / SL1) (Ectothiorhodospira halophila (strain DSM 244 / SL1)).